Here is a 391-residue protein sequence, read N- to C-terminus: Ectodysplasin-A (391 aa).

Residues 1-21 (MGYPEVERREPLPAAAPRERG) show a composition bias toward basic and acidic residues. The tract at residues 1–28 (MGYPEVERREPLPAAAPRERGSQGCGCR) is disordered. Over 1–41 (MGYPEVERREPLPAAAPRERGSQGCGCRGAPARAGEGNSCR) the chain is Cytoplasmic. A helical; Signal-anchor for type II membrane protein transmembrane segment spans residues 42–62 (LFLGFFGLSLALHLLTLCCYL). The Extracellular segment spans residues 63–391 (ELRSELRRER…AIRLGEAPAS (329 aa)). 2 disordered regions span residues 72–129 (RGTE…DSQD) and 146–244 (YSEE…TGTR). The span at 86–96 (TSGTLSSPGSL) shows a compositional bias: low complexity. One can recognise a Collagen-like domain in the interval 180 to 229 (GPPGPNGPPGPPGPPGPQGPPGIPGIPGIPGTTVMGPPGPPGPPGPQGPP). 2 stretches are compositionally biased toward pro residues: residues 181–203 (PPGP…PGIP) and 216–228 (PPGP…PQGP). One can recognise a THD domain in the interval 249 to 385 (AVVHLQGQGS…HTTFFGAIRL (137 aa)). N-linked (GlcNAc...) asparagine glycosylation occurs at asparagine 313. Residues cysteine 332 and cysteine 346 are joined by a disulfide bond. An N-linked (GlcNAc...) asparagine glycan is attached at asparagine 372.

This sequence belongs to the tumor necrosis factor family. Homotrimer. The homotrimers may then dimerize and form higher-order oligomers. In terms of processing, N-glycosylated. Post-translationally, processing by furin produces a secreted form.

The protein localises to the cell membrane. It localises to the secreted. Its function is as follows. Cytokine which is involved in epithelial-mesenchymal signaling during morphogenesis of ectodermal organs. Functions as a ligand activating the DEATH-domain containing receptors EDAR and EDA2R. Isoform TAA binds only to the receptor EDAR, while isoform TA-A2 binds exclusively to the receptor EDA2R. May also play a role in cell adhesion. In terms of biological role, isoform TAA binds only to the receptor EDAR, while isoform TA-A2 binds exclusively to the receptor EDA2R. Isoform TA-A2 binds exclusively to the receptor EDA2R. The chain is Ectodysplasin-A (Eda) from Mus musculus (Mouse).